We begin with the raw amino-acid sequence, 2698 residues long: MADDEAEQERLSGGGCAAELRRLGERLQELERRLCESREPAVEAAAAYCRQLCQTLLEYAEKWKTSEDPLPLLEVYTVAIQSYVKARPYLTSECESVALVLERLALSCVELLLCLPVELSDKQWEQFQTLVQVAHETLMESGSCELQFLATLAQETGVWKNAVLSTILSQEPLDKEKVNEFLAFEGPILLDMRIKHLIKTNQLSQATALAKLCSDHPEIGTKGSFKQTYLVCLCTSSPSEKLIEEISEVDCKDALEMICNLESEGDEKSALVLCTAFLSRQLQQGDMYCAWELTLFWSKLQQRVEPSVQVYLERCRQLSLLTKTVYHIFFLIKVINSETEGAGLATCIELCVKALRLESTENTEVKISICKTISCLLPEDLEVKRACQLSEFLIEPTVDAYYAVEMLYNQPDQKYDEENLPIPNSLRCELLLVLKTQWPFDPEFWDWKTLKRQCLALMGEEASIVSSIDELNDSEVYEKVDYQGERGDTSVNGLSAAGLGTDSGLLMDTGDEKQKKKEIKELKDRGFISARFRNWQAYMQYCLLCDKEFLGHRIVRHAQKHYKDGIYSCPICAKNFNSKDSFVPHVTLHVKQSSKERLAAMKPLRRLGRPPKITATHENQKTNINTVAKQEQRPIKKNSLYSTDFIVFNDNDGSDDENDDKDKSYEPEVIPVQKPVPVNEFNCPVTFCKKGFKYFKNLIAHVKGHKDSEDAKRFLEMQSKKVICQYCRRHFVSVTHLNDHLQMHCGSKPYICIQMKCKAGFNSYAELLAHRKEHQVFRAKCLFPKCGRIFSQAYLLYDHEAQHYNTYTCKFTGCGKVYRSQSEMEKHQDGHSHPETGLPPEDQLQPSGNDVNPDSGATAAGGRSENSIDKNLGSNRSADWEKNRAEPAVTKHGQISAAELRQANIPLSNGLETRDNTTVLRTNEVAVSIKVSVNHGVEGDFGKQENLTMEGTGEPLITDVHKPGIGAGVQLCHPGFQEKKGHECLNEAQNSLSNSESLKMDDLNPQSLERQVNTLMTFSVQNEAGLEDNSQICKFECGGDVKTSSSLYDLPLKTLESITFVQSQPDLSSPLGSPSVPPKAPGQKFSCQVEGCTRTYNSSQSIGKHMKTAHPDQYAAFKLQRKTKKGQKSNNLNTPNHGKCVYFLPSQVSSSNHAFFTPQTKANGNPACSAQVQHVSPSIFPAHLASVSAPLLPSVESVLSPNIPSQDKHGQDGILCSQMENLSNAPLPAQMEDLTKTVLPLNIDSGSDPFLPLPTENSSLFSSPADSENNSVFSQLENSTNHYPSQTDGNINSSFLKGGSSENGVFPSQVSSADDFSSTSAQPSTPKKVKKDRGRGPNGKERKPKHNKRAKWPAIIRDGKFICSRCYRAFTNPRSLGGHLSKRSYCKPLDGAEIAQELLQTNRQPSLLASMILSTSAVNMQQPQQSNFNPETCFKDPSFLQLLNVENRPTFLPSTFPRCDVSNFNASVSQEGSEIIKQALETAGIPSTFESAEMLSQVVPIGSVSDAAQVSAAGMPGPPVTPLLQTVCHPNTSPSNQNQTPNSKTLKECNSLPLFTTNDLLLKTIENGLCSNSFSSSTEPPQNFTNNSAHVSVISGPQNTRSSHLNKKGNSASKKRKKVAPAVSVSNTSQNVLPTDLPVGLPAKNLPVPDTNTRSDMTPDCEPRALVENLTQKLNNIDNHLFITDVKENCKASLEPHTMLTPLTLKTENGDSRMMPLSSCTPVNSDLQISEDNVIQNFEKTLEIIKTAMNSQILEVKSGSQGTGETTQNAQINYSMQLPSVNSIPDNKLPDASQCSSFLTVMPTKSEALHKEDQIQDILEGLQNLKLENDTSAPASQSMLMNKSVALSPTPTKSTPNIVVQPVPEVIHVQLNDRVNKPFVCQNQGCNYSAMTKDALFKHYGKIHQYTPEMILEIKKNQLKFAPFKCVVPSCTKTFTRNSNLRAHCQLVHHFTIEEMVKLKIKRPYGRKSQSENLSSPQNNQVKKQPSMAEETKTESQPAFKVPAATGDAALANATVIPEKQLAEKKSPEKPESSSQPVTSSAEQYNANLANLKTKGRKNKRHRKEKEEKREKNPVSQAFELPTKYSSYRPYCCVHQGCFAAFTIQQNLILHYQAVHKSNLPTFSAEVEEESEAVKESEETEPKQSMKEFRCQVSDCSRIFQAITGLIQHYMKLHEMTPEEIESMTAAVDVGKFPCDQLECKLSFTTYLSYVVHLEVDHGIGTRTSKAEEDGIYKCDCEGCDRIYATRSNLLRHIFNKHNDKHKAHLIRPRKLTGQENISSKANQEKSKSKHRTTKPNRSGKDGMKMPKTKRKKKSNLENKSAKVVQIEENKPYSLKRGKHVYSIKARNDALAECTSKFVTQYPCMIKGCTSVVTSESNIIRHYKCHKLSRAFTSQHRNILIVFKRYGNPQGKEISEQEDEKNDKKDPDSSVLEKNDNSEPAAAPQEEGRKGEKDEMDELTELFITKLINEDSTNAENQGNTTLKGNNEFQEHDSCTSERQKPGNLKRVYKEKNTVQSKKRKIDKTEPEVSLVVNNTRKEEEPAVAVQTTEEHPASFDWSSFKPMGFEASFLKFLEESAVKQKKNSDRDHSNSGSKRGSHSSSRRHVDKAAVAGSSHVCSCKDSEIFVQFANPSKLQCSENVKIVLDKTLKDRSELVLKQLQEMKPTVSLKKLEVLSNNPDRTVLKEISIGKATGRGQY.

The C2H2-type 1 zinc-finger motif lies at 567-589 (YSCPICAKNFNSKDSFVPHVTLH). The residue at position 654 (Ser-654) is a Phosphoserine. 6 C2H2-type zinc fingers span residues 681–705 (FNCPVTFCKKGFKYFKNLIAHVKGH), 722–744 (VICQYCRRHFVSVTHLNDHLQMH), 750–774 (YICIQMKCKAGFNSYAELLAHRKEH), 779–803 (AKCLFPKCGRIFSQAYLLYDHEAQH), 807–831 (YTCKFTGCGKVYRSQSEMEKHQDGH), and 1085–1110 (FSCQVEGCTRTYNSSQSIGKHMKTAH). Positions 822 to 834 (SEMEKHQDGHSHP) are enriched in basic and acidic residues. Positions 822 to 894 (SEMEKHQDGH…AEPAVTKHGQ (73 aa)) are disordered. Lys-1104 is modified (N6-acetyllysine). Residue Ser-1146 is modified to Phosphoserine. Residues 1278-1325 (NSTNHYPSQTDGNINSSFLKGGSSENGVFPSQVSSADDFSSTSAQPST) are compositionally biased toward polar residues. Residues 1278–1349 (NSTNHYPSQT…KERKPKHNKR (72 aa)) form a disordered region. The C2H2-type 8; degenerate zinc-finger motif lies at 1361-1383 (FICSRCYRAFTNPRSLGGHLSKR). Composition is skewed to polar residues over residues 1574–1603 (FSSSTEPPQNFTNNSAHVSVISGPQNTRSS) and 1624–1633 (SVSNTSQNVL). A disordered region spans residues 1574–1656 (FSSSTEPPQN…PVPDTNTRSD (83 aa)). C2H2-type zinc fingers lie at residues 1879–1904 (FVCQNQGCNYSAMTKDALFKHYGKIH) and 1924–1949 (FKCVVPSCTKTFTRNSNLRAHCQLVH). A disordered region spans residues 1964 to 1997 (PYGRKSQSENLSSPQNNQVKKQPSMAEETKTESQ). The span at 1971–1984 (SENLSSPQNNQVKK) shows a compositional bias: polar residues. An N6-acetyllysine modification is found at Lys-2020. Positions 2021-2032 (QLAEKKSPEKPE) are enriched in basic and acidic residues. Residues 2021 to 2075 (QLAEKKSPEKPESSSQPVTSSAEQYNANLANLKTKGRKNKRHRKEKEEKREKNPV) form a disordered region. Positions 2038-2051 (VTSSAEQYNANLAN) are enriched in polar residues. The segment covering 2054–2064 (TKGRKNKRHRK) has biased composition (basic residues). C2H2-type zinc fingers lie at residues 2091-2116 (YCCVHQGCFAAFTIQQNLILHYQAVH), 2149-2174 (FRCQVSDCSRIFQAITGLIQHYMKLH), 2193-2218 (FPCDQLECKLSFTTYLSYVVHLEVDH), and 2233-2258 (YKCDCEGCDRIYATRSNLLRHIFNKH). Positions 2262–2271 (HKAHLIRPRK) are enriched in basic residues. Positions 2262–2323 (HKAHLIRPRK…KSNLENKSAK (62 aa)) are disordered. The C2H2-type 15 zinc finger occupies 2362-2386 (YPCMIKGCTSVVTSESNIIRHYKCH). Disordered regions lie at residues 2411–2454 (GKEI…GEKD), 2467–2553 (LINE…EEHP), and 2580–2608 (KQKKNSDRDHSNSGSKRGSHSSSRRHVDK). Positions 2421-2437 (KNDKKDPDSSVLEKNDN) are enriched in basic and acidic residues. The segment covering 2470-2488 (EDSTNAENQGNTTLKGNNE) has biased composition (polar residues). Composition is skewed to basic and acidic residues over residues 2489-2501 (FQEHDSCTSERQK) and 2580-2590 (KQKKNSDRDHS). Basic residues predominate over residues 2596-2606 (RGSHSSSRRHV).

Belongs to the krueppel C2H2-type zinc-finger protein family. Expressed in postnatal day 1 (P1) pituitary. Also detected in presomatotrophic cell line GHFT1-5.

It is found in the nucleus. May be involved in transcriptional regulation. This chain is Zinc finger protein 292, found in Mus musculus (Mouse).